A 450-amino-acid polypeptide reads, in one-letter code: tRNA modification GTPase MnmE (450 aa).

(6S)-5-formyl-5,6,7,8-tetrahydrofolate-binding residues include Lys21, Glu78, and Lys117. Positions 213–376 (GHALSIVGKP…LSQKISAFFP (164 aa)) constitute a TrmE-type G domain. Asn223 serves as a coordination point for K(+). Residues 223 to 228 (NAGKSS), 242 to 248 (SDIKGTT), and 267 to 270 (DTAG) contribute to the GTP site. Ser227 contacts Mg(2+). K(+)-binding residues include Ser242, Ile244, and Thr247. Thr248 contributes to the Mg(2+) binding site. Lys450 is a binding site for (6S)-5-formyl-5,6,7,8-tetrahydrofolate.

The protein belongs to the TRAFAC class TrmE-Era-EngA-EngB-Septin-like GTPase superfamily. TrmE GTPase family. Homodimer. Heterotetramer of two MnmE and two MnmG subunits. K(+) is required as a cofactor.

It localises to the cytoplasm. In terms of biological role, exhibits a very high intrinsic GTPase hydrolysis rate. Involved in the addition of a carboxymethylaminomethyl (cmnm) group at the wobble position (U34) of certain tRNAs, forming tRNA-cmnm(5)s(2)U34. The protein is tRNA modification GTPase MnmE of Helicobacter pylori (strain Shi470).